A 495-amino-acid polypeptide reads, in one-letter code: Glycerol kinase (495 aa).

Thr11 contributes to the ADP binding site. ATP-binding residues include Thr11, Thr12, and Ser13. Thr11 serves as a coordination point for sn-glycerol 3-phosphate. Residues Arg81, Glu82, Tyr133, and Asp242 each coordinate sn-glycerol 3-phosphate. 5 residues coordinate glycerol: Arg81, Glu82, Tyr133, Asp242, and Gln243. ADP contacts are provided by Thr264, Gly307, Gly407, and Asn411. ATP-binding residues include Thr264, Gly307, and Gly407.

It belongs to the FGGY kinase family.

It carries out the reaction glycerol + ATP = sn-glycerol 3-phosphate + ADP + H(+). It functions in the pathway polyol metabolism; glycerol degradation via glycerol kinase pathway; sn-glycerol 3-phosphate from glycerol: step 1/1. Its activity is regulated as follows. Inhibited by fructose 1,6-bisphosphate (FBP). Key enzyme in the regulation of glycerol uptake and metabolism. Catalyzes the phosphorylation of glycerol to yield sn-glycerol 3-phosphate. The chain is Glycerol kinase from Thermus brockianus.